We begin with the raw amino-acid sequence, 228 residues long: Acyl-protein thioesterase 1 (228 aa).

Catalysis depends on charge relay system residues serine 119, aspartate 174, and histidine 208.

The protein belongs to the AB hydrolase superfamily. AB hydrolase 2 family.

Its subcellular location is the cytoplasm. It localises to the nucleus. It catalyses the reaction S-hexadecanoyl-L-cysteinyl-[protein] + H2O = L-cysteinyl-[protein] + hexadecanoate + H(+). Functionally, hydrolyzes fatty acids from S-acylated cysteine residues in proteins with a strong preference for palmitoylated G-alpha proteins over other acyl substrates. Mediates the deacylation of G-alpha proteins such as GPA1 in vivo, but has weak or no activity toward palmitoylated Ras proteins. Has weak lysophospholipase activity in vitro; however such activity may not exist in vivo. In Kluyveromyces lactis (strain ATCC 8585 / CBS 2359 / DSM 70799 / NBRC 1267 / NRRL Y-1140 / WM37) (Yeast), this protein is Acyl-protein thioesterase 1.